An 82-amino-acid polypeptide reads, in one-letter code: Small ribosomal subunit protein bS18 (82 aa).

Positions 1–24 (MKRTNMKKARMEQSRRPKKNPLKA) are disordered.

This sequence belongs to the bacterial ribosomal protein bS18 family. As to quaternary structure, part of the 30S ribosomal subunit. Forms a tight heterodimer with protein bS6.

Its function is as follows. Binds as a heterodimer with protein bS6 to the central domain of the 16S rRNA, where it helps stabilize the platform of the 30S subunit. The protein is Small ribosomal subunit protein bS18 of Corynebacterium jeikeium (strain K411).